A 76-amino-acid chain; its full sequence is MAKIVRIKGEIIGKDEPMVFTKEYNVVKEDDALETMYSEMGSKHAVKRANIKVVEISEISEEDIQNPILKKTLEMY.

The protein belongs to the eukaryotic ribosomal protein eL20 family. As to quaternary structure, part of the 50S ribosomal subunit. Binds 23S rRNA.

This is Large ribosomal subunit protein eL20 from Methanococcus maripaludis (strain C5 / ATCC BAA-1333).